We begin with the raw amino-acid sequence, 168 residues long: Bifunctional protein PyrR (168 aa).

The short motif at 90-102 is the PRPP-binding element; that stretch reads LVLIDDVLMSGRT.

The protein belongs to the purine/pyrimidine phosphoribosyltransferase family. PyrR subfamily.

The enzyme catalyses UMP + diphosphate = 5-phospho-alpha-D-ribose 1-diphosphate + uracil. Functionally, regulates the transcription of the pyrimidine nucleotide (pyr) operon in response to exogenous pyrimidines. In terms of biological role, also displays a weak uracil phosphoribosyltransferase activity which is not physiologically significant. This is Bifunctional protein PyrR from Pseudomonas fluorescens (strain ATCC BAA-477 / NRRL B-23932 / Pf-5).